The following is a 562-amino-acid chain: Potassium-transporting ATPase potassium-binding subunit (562 aa).

The next 12 helical transmembrane spans lie at 6 to 26 (FLLI…LGGF), 62 to 82 (YALA…VLLM), 132 to 152 (GLTV…FALI), 175 to 195 (LYVL…QGVL), 253 to 273 (FVQM…FGQV), 283 to 303 (LIWA…YAEL), 327 to 347 (FGIL…CGAV), 356 to 376 (ALGG…FGGV), 379 to 399 (GLYG…LMIG), 416 to 436 (MTAL…ALAL), 483 to 503 (LLLA…VLAI), and 524 to 544 (GLLF…LTFI).

The protein belongs to the KdpA family. The system is composed of three essential subunits: KdpA, KdpB and KdpC.

The protein localises to the cell inner membrane. Part of the high-affinity ATP-driven potassium transport (or Kdp) system, which catalyzes the hydrolysis of ATP coupled with the electrogenic transport of potassium into the cytoplasm. This subunit binds the periplasmic potassium ions and delivers the ions to the membrane domain of KdpB through an intramembrane tunnel. The sequence is that of Potassium-transporting ATPase potassium-binding subunit from Yersinia pestis bv. Antiqua (strain Antiqua).